The primary structure comprises 250 residues: MTSASELFSTRRSRPGRSDPALESDTSSYRHHSHHHHRRHGVHHHNQRHDSDGCDPLRRPTPRLRRFFHHPIQERSRPIRDVQGTSQYLNTDSTDTETQSSSFVNLNGSERLPGAVLLARDRLFERLRGVSLSSNSRSNRVSLDDQRESSFHSIDGDPIFQLAGLQVTYECNKKPQGLTQDAINCLHRQTFSSAEVKSEMRDCSICLESFTKGDMLISLPCTHSFHSSCLNPWLRACGDCPCCRRAIAKE.

Positions 1-10 (MTSASELFST) are enriched in polar residues. The tract at residues 1–106 (MTSASELFST…ETQSSSFVNL (106 aa)) is disordered. Residues 29–47 (YRHHSHHHHRRHGVHHHNQ) are compositionally biased toward basic residues. Residues 48 to 58 (RHDSDGCDPLR) are compositionally biased toward basic and acidic residues. Basic residues predominate over residues 60–69 (PTPRLRRFFH). Residues 71 to 80 (PIQERSRPIR) show a composition bias toward basic and acidic residues. Over residues 91-102 (TDSTDTETQSSS) the composition is skewed to low complexity. The segment at 203–244 (CSICLESFTKGDMLISLPCTHSFHSSCLNPWLRACGDCPCCR) adopts an RING-type; atypical zinc-finger fold.

The enzyme catalyses S-ubiquitinyl-[E2 ubiquitin-conjugating enzyme]-L-cysteine + [acceptor protein]-L-lysine = [E2 ubiquitin-conjugating enzyme]-L-cysteine + N(6)-ubiquitinyl-[acceptor protein]-L-lysine.. The protein operates within protein modification; protein ubiquitination. Probable E3 ubiquitin-protein ligase that may possess E3 ubiquitin ligase activity in vitro. The sequence is that of Probable E3 ubiquitin-protein ligase RHY1A from Arabidopsis thaliana (Mouse-ear cress).